Consider the following 315-residue polypeptide: Thymidylate synthase (315 aa).

Residues arginine 22 and 177 to 178 (RR) contribute to the dUMP site. The Nucleophile role is filled by cysteine 197. Residues 217-220 (RSAD), asparagine 228, and 258-260 (HLY) each bind dUMP. Aspartate 220 is a (6R)-5,10-methylene-5,6,7,8-tetrahydrofolate binding site. Alanine 314 contacts (6R)-5,10-methylene-5,6,7,8-tetrahydrofolate.

The protein belongs to the thymidylate synthase family. Bacterial-type ThyA subfamily. Homodimer.

Its subcellular location is the cytoplasm. It carries out the reaction dUMP + (6R)-5,10-methylene-5,6,7,8-tetrahydrofolate = 7,8-dihydrofolate + dTMP. Its pathway is pyrimidine metabolism; dTTP biosynthesis. Its function is as follows. Catalyzes the reductive methylation of 2'-deoxyuridine-5'-monophosphate (dUMP) to 2'-deoxythymidine-5'-monophosphate (dTMP) while utilizing 5,10-methylenetetrahydrofolate (mTHF) as the methyl donor and reductant in the reaction, yielding dihydrofolate (DHF) as a by-product. This enzymatic reaction provides an intracellular de novo source of dTMP, an essential precursor for DNA biosynthesis. This Enterococcus faecalis (strain ATCC 700802 / V583) protein is Thymidylate synthase.